Consider the following 763-residue polypeptide: Thyrotropin receptor (763 aa).

The first 21 residues, 1–21 (MRQTPLLQLALLLSLPRSLGG), serve as a signal peptide directing secretion. Residues 22–412 (KGCPSPPCEC…EFNPCEDIMG (391 aa)) are Extracellular-facing. Residues C31 and C41 are joined by a disulfide bond. N-linked (GlcNAc...) asparagine glycans are attached at residues N77 and N99. 7 LRR repeats span residues 100-124 (LSKM…ALKE), 125-150 (LPLL…VYST), 151-174 (DVFF…AFQG), 176-199 (CNET…AFNG), 201-223 (KLDA…AFGG), 225-248 (YSGP…GLEH), and 264-288 (PLTL…AFKN). 2 N-linked (GlcNAc...) asparagine glycosylation sites follow: N177 and N198. N302 carries N-linked (GlcNAc...) asparagine glycosylation. Y384 carries the post-translational modification Sulfotyrosine. A helical transmembrane segment spans residues 413 to 440 (YKFLRIVVWFVSLLALLGNVFVLIILLT). The Cytoplasmic segment spans residues 441-449 (SHYKLTVPR). A helical membrane pass occupies residues 450 to 472 (FLMCNLAFADFCMGMYLLLIASV). Topologically, residues 473–493 (DLYTHSEYYNHAIDWQTGPGC) are extracellular. A disulfide bridge connects residues C493 and C568. A helical membrane pass occupies residues 494-516 (NAAGFFTVFASELSVYTLTVITL). Residues 517 to 536 (ERWYAITFAMRLDRKMRLRH) lie on the Cytoplasmic side of the membrane. A helical membrane pass occupies residues 537 to 559 (AYAIMVGGWVCCFLLALLPLVGI). Residues 560 to 579 (SSYAKVSICLPMDTETPLAL) lie on the Extracellular side of the membrane. Residues 580–601 (AYIILVLLLNIVAFIIVCSCYV) traverse the membrane as a helical segment. Topologically, residues 602–624 (KIYITVRNPQYNTGDKDTKIAKR) are cytoplasmic. A helical membrane pass occupies residues 625 to 648 (MAVLIFTDFMCMAPISFYALSALM). At 649–659 (NKPLITVTNSK) the chain is on the extracellular side. Residues 660–681 (ILLVLFYPLNSCANPFLYAIFT) traverse the membrane as a helical segment. Over 682–763 (KTFQRDVFIL…ISKEYNQTVL (82 aa)) the chain is Cytoplasmic. Positions 761–763 (TVL) match the PDZ-binding motif.

The protein belongs to the G-protein coupled receptor 1 family. FSH/LSH/TSH subfamily. In terms of assembly, interacts with heterodimer GPHA2:GPHB5; this interaction stimulates cAMP production. Interacts (via the PDZ-binding motif) with SCRIB; regulates TSHR trafficking and function. Post-translationally, glycosylated. Sulfated. Sulfation on Tyr-384 plays a role in thyrotropin receptor binding and activation.

The protein resides in the cell membrane. Its subcellular location is the basolateral cell membrane. Functionally, receptor for the thyroid-stimulating hormone (TSH) or thyrotropin. Also acts as a receptor for the heterodimeric glycoprotein hormone (GPHA2:GPHB5) or thyrostimulin. The activity of this receptor is mediated by G proteins which activate adenylate cyclase. Plays a central role in controlling thyroid cell metabolism. The polypeptide is Thyrotropin receptor (TSHR) (Felis catus (Cat)).